The primary structure comprises 670 residues: DNA mismatch repair protein MutL (670 aa).

The interval 363–451 (SFDRGRPLSR…RAAGGPASTH (89 aa)) is disordered. Basic and acidic residues predominate over residues 379 to 389 (ERWRERHRPDA).

The protein belongs to the DNA mismatch repair MutL/HexB family.

Its function is as follows. This protein is involved in the repair of mismatches in DNA. It is required for dam-dependent methyl-directed DNA mismatch repair. May act as a 'molecular matchmaker', a protein that promotes the formation of a stable complex between two or more DNA-binding proteins in an ATP-dependent manner without itself being part of a final effector complex. This is DNA mismatch repair protein MutL from Syntrophobacter fumaroxidans (strain DSM 10017 / MPOB).